A 646-amino-acid polypeptide reads, in one-letter code: Kinesin-like protein klp-20 (646 aa).

One can recognise a Kinesin motor domain in the interval 6–331 (KVKVVVRCRP…LRYANRAKNI (326 aa)). 91 to 98 (GQTGTGKT) contacts ATP. The stretch at 342 to 552 (KDAQLRKFQL…LRKELLLNIA (211 aa)) forms a coiled coil. The interval 525–550 (LEEDHQRQVEAMLDDIRQLRKELLLN) is interaction with klp-11. Residues 623–646 (TAEHRPRTSSKKHRASIRLQQLLT) form a disordered region. Over residues 629–638 (RTSSKKHRAS) the composition is skewed to basic residues.

The protein belongs to the TRAFAC class myosin-kinesin ATPase superfamily. Kinesin family. Kinesin II subfamily. Component of the kinesin II motor complex, a heterotrimeric complex composed of kap-1, klp-11 and klp-20. Interacts (via C-terminus) with klp-11 (via C-terminus) to form a heterodimer. Furthermore, within the heterodimer, the C-termini of klp-20 and klp-11 interact to form a coiled coil (stalk) or tail domain, and this is necessary for association with kap-1, and kinesin II motor complex activity upon IFT cargo binding. Prior to cargo binding, the klp-11/klp-20 heterodimer is autoinhibited by the tail domain of the heterodimer, which folds onto the kinesin motor domain. Cargo binding to the heterodimer relieves the autoinhibition, and allows for an extended conformation of the tail domain, and function of the heterodimer.

It is found in the cell projection. The protein localises to the cilium. Its subcellular location is the cytoplasm. It localises to the cytoskeleton. Functionally, component of the kinesin II motor complex (composed of kap-1 and the heterodimeric motor proteins klp-11 and klp-20) which is required for intraflagellar transport (IFT). Heterodimerizes with klp-11 to form a 'processive' molecular motor upon IFT cargo binding, which, within the kinesin II motor complex, binds to and moves along microtubules in a unidirectional manner (without dissociation of the heterodimer), and in turn, is responsible for the IFT of cargo. Specifically, the kinesin II motor complex, together with the kinesin motor protein osm-3 moves along microtubules and is required for anterograde IFT along the middle segment of the sensory neuron cilia. In particular, the kinesin II motor complex delivers specific ciliary cargo proteins such as che-3 which are related to motility to ciliary tips. This is likely mediated by IFT complexes A and B. The chain is Kinesin-like protein klp-20 from Caenorhabditis elegans.